Consider the following 201-residue polypeptide: UPF0301 protein R00917 (201 aa).

The protein belongs to the UPF0301 (AlgH) family.

This is UPF0301 protein R00917 from Rhizobium meliloti (strain 1021) (Ensifer meliloti).